Here is a 321-residue protein sequence, read N- to C-terminus: Leucine-rich repeat-containing protein 46 (321 aa).

4 LRR repeats span residues 45 to 66 (ELQTVRLDREGITTIRNLEGLK), 67 to 88 (NLHSLYLQGNKIQQIENLACVP), 89 to 110 (SLRFLSLAGNQIRQVENLLDLP), and 111 to 132 (CLQFLDLSENLIETLKLDEFPQ). An LRRCT domain is found at 142-184 (NSCTNQDSYRELVIEALPLLLDLDGQPVMERWISDEEDEASSE). Phosphoserine occurs at positions 175 and 182. A coiled-coil region spans residues 198–222 (RGFLKELEQELSRHREHRQQAALTQ). The disordered stretch occupies residues 235 to 321 (NLPLLPGVPM…TKTMAKRSKK (87 aa)).

The protein resides in the cell projection. It localises to the cilium. It is found in the flagellum. Functionally, required for normal spermatogenesis and male fertility. Plays an important role in sperm flagellum biogenesis. The chain is Leucine-rich repeat-containing protein 46 (LRRC46) from Macaca fascicularis (Crab-eating macaque).